The primary structure comprises 515 residues: Endoglucanase 23 (515 aa).

A signal peptide spans 1-29; sequence MALLSAPVRRRRSRVRVLLVCCCLLLALA. Asp95 acts as the Nucleophile in catalysis. Residues Asn178, Asn375, and Asn384 are each glycosylated (N-linked (GlcNAc...) asparagine). Residue His426 is part of the active site. An N-linked (GlcNAc...) asparagine glycan is attached at Asn452. Active-site residues include Asp477 and Glu486.

The protein belongs to the glycosyl hydrolase 9 (cellulase E) family.

The protein resides in the secreted. It catalyses the reaction Endohydrolysis of (1-&gt;4)-beta-D-glucosidic linkages in cellulose, lichenin and cereal beta-D-glucans.. In Oryza sativa subsp. japonica (Rice), this protein is Endoglucanase 23 (GLU12).